Reading from the N-terminus, the 389-residue chain is Meiosis-specific protein MEI4 (389 aa).

The segment at 1–127 (MDIQPWYLKT…LSQHFVESTD (127 aa)) is interaction with REC114.

This sequence belongs to the MEI4L family. Part of the MCD recombinosome complex, at least composed of IHO1, REC114 and MEI4. Forms a complex with REC114; the interaction is required for MEI4 stability. Interacts (via N-terminal domain) with REC114 (via C-terminal domain). Interacts with IHO1. As to expression, expressed in adult testis and brain and in embryonic ovary.

The protein localises to the chromosome. Its function is as follows. Required for DNA double-strand breaks (DSBs) formation in unsynapsed regions during meiotic recombination. Probably acts by forming a complex with IHO1 and REC114, which activates DSBs formation in unsynapsed regions, an essential step to ensure completion of synapsis. This chain is Meiosis-specific protein MEI4, found in Mus musculus (Mouse).